Consider the following 380-residue polypeptide: Lipid-A-disaccharide synthase (380 aa).

Belongs to the LpxB family.

It carries out the reaction a lipid X + a UDP-2-N,3-O-bis[(3R)-3-hydroxyacyl]-alpha-D-glucosamine = a lipid A disaccharide + UDP + H(+). Its pathway is bacterial outer membrane biogenesis; LPS lipid A biosynthesis. Its function is as follows. Condensation of UDP-2,3-diacylglucosamine and 2,3-diacylglucosamine-1-phosphate to form lipid A disaccharide, a precursor of lipid A, a phosphorylated glycolipid that anchors the lipopolysaccharide to the outer membrane of the cell. The polypeptide is Lipid-A-disaccharide synthase (Vibrio vulnificus (strain CMCP6)).